The following is a 579-amino-acid chain: uncharacterized protein (579 aa).

The protein belongs to the UbiD family.

This is an uncharacterized protein from Chlamydia muridarum (strain MoPn / Nigg).